The sequence spans 370 residues: Pantothenate kinase 3 (370 aa).

The active-site Proton acceptor is Glu138. Acetyl-CoA contacts are provided by Ser192, Ser195, and Arg207.

This sequence belongs to the type II pantothenate kinase family. Homodimer. Highly expressed in the liver.

It is found in the cytoplasm. It carries out the reaction (R)-pantothenate + ATP = (R)-4'-phosphopantothenate + ADP + H(+). Its pathway is cofactor biosynthesis; coenzyme A biosynthesis; CoA from (R)-pantothenate: step 1/5. With respect to regulation, subject to allosteric regulation, exists in two distinct conformational states, a catalytically incompetent (or open) conformation stabilized by the binding of acetyl(acyl)-CoA, and a catalytically competent (or closed) conformation stabilized by ATP-binding. Inhibited by acetyl-CoA and its thioesters which act as allosteric inhibitors and compete with the ATP-binding site. Inhibited by sulfonylureas and thiazolidinediones. Activated by oleoylethanolamide, palmitoyl-carnitine and oleoyl-carnitine. Catalyzes the phosphorylation of pantothenate to generate 4'-phosphopantothenate in the first and rate-determining step of coenzyme A (CoA) synthesis. This chain is Pantothenate kinase 3 (PANK3), found in Homo sapiens (Human).